The sequence spans 311 residues: 4-diphosphocytidyl-2-C-methyl-D-erythritol kinase (311 aa).

Lys-16 is a catalytic residue. Position 100–110 (100–110 (PIGAGLAGGSS)) interacts with ATP. The active site involves Asp-142.

Belongs to the GHMP kinase family. IspE subfamily.

The catalysed reaction is 4-CDP-2-C-methyl-D-erythritol + ATP = 4-CDP-2-C-methyl-D-erythritol 2-phosphate + ADP + H(+). It functions in the pathway isoprenoid biosynthesis; isopentenyl diphosphate biosynthesis via DXP pathway; isopentenyl diphosphate from 1-deoxy-D-xylulose 5-phosphate: step 3/6. In terms of biological role, catalyzes the phosphorylation of the position 2 hydroxy group of 4-diphosphocytidyl-2C-methyl-D-erythritol. The protein is 4-diphosphocytidyl-2-C-methyl-D-erythritol kinase of Prochlorococcus marinus (strain MIT 9312).